The following is a 220-amino-acid chain: Aklanonic acid methyltransferase DauC (220 aa).

The protein belongs to the methyltransferase superfamily. DnrC family. In terms of assembly, homodimer.

The catalysed reaction is aklanonate + S-adenosyl-L-methionine = methyl aklanonate + S-adenosyl-L-homocysteine. Its pathway is antibiotic biosynthesis; daunorubicin biosynthesis. It functions in the pathway antibiotic biosynthesis; carminomycin biosynthesis. It participates in antibiotic biosynthesis; rhodomycin biosynthesis. The protein operates within antibiotic biosynthesis; aclacinomycin biosynthesis. Involved in the biosynthesis of aklavinone which is an important precursor common to the formation of the clinically significant anthracyclines such as carminomycin, daunorubicin (daunomycin), rhodomycin, aclacinomycin T (aklavin) and aclacinomycin A (aclarubicin). These compounds are aromatic polyketide antibiotics that exhibit high cytotoxicity and are widely applied in the chemotherapy of a variety of cancers. Catalyzes the methyl esterification of aklanonic acid to yield aklanonic acid methyl ester. The chain is Aklanonic acid methyltransferase DauC (dauC) from Streptomyces sp. (strain C5).